The sequence spans 86 residues: MKVSVLITLAVLGVMFVWASAAELEERGSDQRDSPAWLKSMERIFRSEERECRKMFGGCSVDSDCCAHLGCKPTLKYCAWDGTFGK.

The signal sequence occupies residues 1-21 (MKVSVLITLAVLGVMFVWASA). Residues 22–50 (AELEERGSDQRDSPAWLKSMERIFRSEER) constitute a propeptide that is removed on maturation. 3 cysteine pairs are disulfide-bonded: Cys-52–Cys-66, Cys-59–Cys-71, and Cys-65–Cys-78. Phe-84 bears the Phenylalanine amide mark.

Belongs to the neurotoxin 10 (Hwtx-1) family. 28 (Jztx-11) subfamily. Expressed by the venom gland.

The protein resides in the secreted. In terms of biological role, this toxin acts as a voltage-dependent gating-modifier. It inhibits the sodium conductance (IC(50)=124 nM) and slows the fast inactivation (EC(50)=1180 nM) of Nav1.5/SCN5A. It significantly shifts the activation to more depolarized voltages and decreases the deactivation of Nav1.5 currents upon extreme depolarization, but only slightly affects voltage-dependence of steady-state inactivation. In addition, this toxin causes an approximately five-fold decrease in the rate of recovery from inactivation and an approximately 1.9-fold reduction in the closed-state inactivation rate. This toxin integrates the functions of site 3 toxins (alpha-scorpion toxins) with site 4 toxins (beta-scorpion and spider toxins) by targeting multiple sites on Nav1.5. Also shows inhibition of voltage-gated potassium channels (5 uM completely inhibits Kv2.1/KCNB1, whereas 5 uM moderately inhibits Kv4.2/KCND2 Kv4.1/KCND1 channels). In Chilobrachys guangxiensis (Chinese earth tiger tarantula), this protein is Kappa-theraphotoxin-Cg1a 3.